The sequence spans 327 residues: MLKKYLPLLLLCAAPAFAKPVLTVYTYDSFAADWGPGPAVKKAFEADCNCELKLVALEDGVSLLNRLRMEGKNSKADVVLGLDNNLLEAATQTKLFAKSGVANEAVKVPGGWKNDTFVPFDYGYFAFVYDKSKLKNPPKSLKELVESDQKWRVIYQDPRTSTPGLGLLLWMRKVYGDNAPQAWQKLAAKTVTVTKGWSEAYGLFLKGESDLVLSYTTSPAYHIIEEKKDNYAAANFSEGHYLQVEVAARTVASKQPELAEKFLKFMVSPAFQNAIPTGNWMYPVADVALPAGFESLAKPATTLEFTPQQVAAQRQAWISEWQRAVSR.

The N-terminal stretch at 1–18 is a signal peptide; it reads MLKKYLPLLLLCAAPAFA. Thiamine is bound by residues 59-60, 161-162, Trp-197, and 215-218; these read DG, ST, and YTTS.

It belongs to the bacterial solute-binding protein 1 family. As to quaternary structure, the complex is composed of two ATP-binding proteins (ThiQ), two transmembrane proteins (ThiP) and a solute-binding protein (ThiB).

It is found in the periplasm. Part of the ABC transporter complex ThiBPQ involved in thiamine import. Is also involved in thiamine pyrophosphate transport. The sequence is that of Thiamine-binding periplasmic protein from Salmonella typhimurium (strain LT2 / SGSC1412 / ATCC 700720).